The primary structure comprises 305 residues: UDP-3-O-acyl-N-acetylglucosamine deacetylase (305 aa).

Zn(2+)-binding residues include His-79, His-238, and Asp-242. Residue His-265 is the Proton donor of the active site.

The protein belongs to the LpxC family. It depends on Zn(2+) as a cofactor.

The enzyme catalyses a UDP-3-O-[(3R)-3-hydroxyacyl]-N-acetyl-alpha-D-glucosamine + H2O = a UDP-3-O-[(3R)-3-hydroxyacyl]-alpha-D-glucosamine + acetate. The protein operates within glycolipid biosynthesis; lipid IV(A) biosynthesis; lipid IV(A) from (3R)-3-hydroxytetradecanoyl-[acyl-carrier-protein] and UDP-N-acetyl-alpha-D-glucosamine: step 2/6. In terms of biological role, catalyzes the hydrolysis of UDP-3-O-myristoyl-N-acetylglucosamine to form UDP-3-O-myristoylglucosamine and acetate, the committed step in lipid A biosynthesis. The polypeptide is UDP-3-O-acyl-N-acetylglucosamine deacetylase (Klebsiella pneumoniae (strain 342)).